A 554-amino-acid polypeptide reads, in one-letter code: Hedycaryol synthase (554 aa).

(2E,6E)-farnesyl diphosphate is bound by residues Arg-270, Asp-307, Asp-311, Arg-449, and Asp-452. The Mg(2+) site is built by Asp-307 and Asp-311. The short motif at 307–311 (DDTYD) is the DDXXD motif element. The Mg(2+) site is built by Asp-452, Ser-456, and Glu-460.

Belongs to the terpene synthase family. It depends on Mg(2+) as a cofactor. As to expression, specifically expressed in flowers.

It catalyses the reaction (2E,6E)-farnesyl diphosphate + H2O = (2E,6E)-hedycaryol + diphosphate. The protein operates within secondary metabolite biosynthesis; terpenoid biosynthesis. Functionally, sesquiterpene synthase that catalyzes the formation of sesquiterpenes and sesquiterpenoid alcohols. Converts farnesyl diphosphate (FPP) to hedycaryol. Hedycaryol is likely to be one of the terpenes that attract insects for pollination of Camellia brevistyla. The chain is Hedycaryol synthase from Camellia brevistyla.